Here is a 482-residue protein sequence, read N- to C-terminus: Tripartite motif-containing protein 10 (482 aa).

Residues Cys16–Lys61 form an RING-type zinc finger. A B box-type zinc finger spans residues Glu95–Leu136. Residues Cys100, His103, Cys122, and His128 each coordinate Zn(2+). Residues Arg293–Ser482 form the B30.2/SPRY domain.

Belongs to the TRIM/RBCC family. Interacts with IFNAR1; this interaction prevents association of IFNAR1 with TYK2.

It localises to the cytoplasm. Its function is as follows. E3 ligase that plays an essential role in the differentiation and survival of terminal erythroid cells. May directly bind to PTEN and promote its ubiquitination, resulting in its proteasomal degradation and activation of hypertrophic signaling. In addition, plays a role in immune response regulation by repressing the phosphorylation of STAT1 and STAT2 in the interferon/JAK/STAT signaling pathway independent of its E3 ligase activity. Mechanistically, interacts with the intracellular domain of IFNAR1 and thereby inhibits the association of TYK2 and IFNAR1. The polypeptide is Tripartite motif-containing protein 10 (TRIM10) (Sus scrofa (Pig)).